The chain runs to 107 residues: Putative ATP synthase subunit f, mitochondrial (107 aa).

The protein belongs to the ATPase F chain family. F-type ATPases have 2 components, CF(1) - the catalytic core - and CF(0) - the membrane proton channel. CF(0) seems to have nine subunits: a, b, c, d, e, f, g, F6 and 8 (or A6L).

The protein localises to the mitochondrion membrane. Mitochondrial membrane ATP synthase (F(1)F(0) ATP synthase or Complex V) produces ATP from ADP in the presence of a proton gradient across the membrane which is generated by electron transport complexes of the respiratory chain. F-type ATPases consist of two structural domains, F(1) - containing the extramembraneous catalytic core and F(0) - containing the membrane proton channel, linked together by a central stalk and a peripheral stalk. During catalysis, ATP synthesis in the catalytic domain of F(1) is coupled via a rotary mechanism of the central stalk subunits to proton translocation. Part of the complex F(0) domain. Minor subunit located with subunit a in the membrane. This chain is Putative ATP synthase subunit f, mitochondrial, found in Drosophila melanogaster (Fruit fly).